The sequence spans 610 residues: Aspartate--tRNA(Asp/Asn) ligase (610 aa).

Glu177 contributes to the L-aspartate binding site. Residues 201 to 204 (QLFK) form an aspartate region. Position 223 (Arg223) interacts with L-aspartate. Residues 223-225 (RDE) and Gln232 contribute to the ATP site. His461 lines the L-aspartate pocket. Residue Glu499 participates in ATP binding. Arg506 is an L-aspartate binding site. An ATP-binding site is contributed by 551–554 (GVDR).

The protein belongs to the class-II aminoacyl-tRNA synthetase family. Type 1 subfamily. As to quaternary structure, homodimer.

The protein localises to the cytoplasm. The catalysed reaction is tRNA(Asx) + L-aspartate + ATP = L-aspartyl-tRNA(Asx) + AMP + diphosphate. Aspartyl-tRNA synthetase with relaxed tRNA specificity since it is able to aspartylate not only its cognate tRNA(Asp) but also tRNA(Asn). Reaction proceeds in two steps: L-aspartate is first activated by ATP to form Asp-AMP and then transferred to the acceptor end of tRNA(Asp/Asn). The protein is Aspartate--tRNA(Asp/Asn) ligase of Parasynechococcus marenigrum (strain WH8102).